The primary structure comprises 124 residues: Small ribosomal subunit protein uS12 (124 aa).

The segment at 1–24 (MPTINQLIKKPRKSQKEKTASPAL) is disordered. Asp89 carries the 3-methylthioaspartic acid modification.

This sequence belongs to the universal ribosomal protein uS12 family. As to quaternary structure, part of the 30S ribosomal subunit. Contacts proteins S8 and S17. May interact with IF1 in the 30S initiation complex.

With S4 and S5 plays an important role in translational accuracy. Its function is as follows. Interacts with and stabilizes bases of the 16S rRNA that are involved in tRNA selection in the A site and with the mRNA backbone. Located at the interface of the 30S and 50S subunits, it traverses the body of the 30S subunit contacting proteins on the other side and probably holding the rRNA structure together. The combined cluster of proteins S8, S12 and S17 appears to hold together the shoulder and platform of the 30S subunit. In Borrelia hermsii (strain HS1 / DAH), this protein is Small ribosomal subunit protein uS12.